A 49-amino-acid polypeptide reads, in one-letter code: Large ribosomal subunit protein bL33B (49 aa).

This sequence belongs to the bacterial ribosomal protein bL33 family.

This is Large ribosomal subunit protein bL33B from Lacticaseibacillus paracasei (strain ATCC 334 / BCRC 17002 / CCUG 31169 / CIP 107868 / KCTC 3260 / NRRL B-441) (Lactobacillus paracasei).